A 330-amino-acid polypeptide reads, in one-letter code: Dipeptide transport ATP-binding protein DppD (330 aa).

The region spanning 6 to 254 (VKELSVHFGD…PKHPYTQALL (249 aa)) is the ABC transporter domain. An ATP-binding site is contributed by 40–47 (GESGSGKS).

It belongs to the ABC transporter superfamily.

Its subcellular location is the cell inner membrane. It carries out the reaction a dipeptide(out) + ATP + H2O = a dipeptide(in) + ADP + phosphate + H(+). Part of the ABC transporter DppBCDF involved in dipeptide transport. Responsible for energy coupling to the transport system. This Haemophilus influenzae (strain ATCC 51907 / DSM 11121 / KW20 / Rd) protein is Dipeptide transport ATP-binding protein DppD (dppD).